A 149-amino-acid polypeptide reads, in one-letter code: Large ribosomal subunit protein uL11 (149 aa).

Belongs to the universal ribosomal protein uL11 family. In terms of assembly, part of the ribosomal stalk of the 50S ribosomal subunit. Interacts with L10 and the large rRNA to form the base of the stalk. L10 forms an elongated spine to which L12 dimers bind in a sequential fashion forming a multimeric L10(L12)X complex. In terms of processing, one or more lysine residues are methylated.

Forms part of the ribosomal stalk which helps the ribosome interact with GTP-bound translation factors. This chain is Large ribosomal subunit protein uL11, found in Methylorubrum extorquens (strain CM4 / NCIMB 13688) (Methylobacterium extorquens).